The chain runs to 610 residues: Mitochondrial import receptor subunit TOM70 (610 aa).

Alanine 2 bears the N-acetylalanine mark. Topologically, residues 2–41 (AASKPVEAAMAAAAAPASGNGVGSSGGTAAPGSGAGTLPR) are mitochondrial intermembrane. Residues 42–62 (WHVALAIGAPLLLGAGAMYLW) form a helical membrane-spanning segment. At 63–610 (SRRRRRREAG…KKYGLKPPTL (548 aa)) the chain is on the cytoplasmic side. The disordered stretch occupies residues 69-109 (REAGGRGDASGLKRNSERKTPEGRASPALGSGPDGSGDSLE). Arginine 74 bears the Omega-N-methylarginine mark. Residues 93 to 108 (ASPALGSGPDGSGDSL) are compositionally biased toward low complexity. 5 positions are modified to phosphoserine: serine 94, serine 99, serine 104, serine 107, and serine 112. TPR repeat units follow at residues 116-149 (AQAA…CPTE) and 155-188 (STFY…NPKY). Lysine 187 carries the post-translational modification N6-acetyllysine. A Glycyl lysine isopeptide (Lys-Gly) (interchain with G-Cter in SUMO2) cross-link involves residue lysine 277. TPR repeat units lie at residues 296–329 (ENSG…QGKY), 331–364 (AEAL…KEAN), 369–402 (ANAL…DPMN), 403–436 (SDVY…RPKF), 444–477 (CFAL…FPRC), 478–511 (AEGY…EPDN), 513–546 (TTYV…DNKC), and 547–580 (DFAY…AKSE).

The protein belongs to the Tom70 family. As to quaternary structure, forms part of the preprotein translocase complex of the outer mitochondrial membrane (TOM complex) which consists of at least 7 different proteins (TOMM5, TOMM6, TOMM7, TOMM20, TOMM22, TOMM40 and TOMM70). Interacts with CAPN8. Interacts with TRADD, TRAF6 and STING. Interacts with MAVS. Interacts with HSPA8 and HSP90AA1; both interactions are required for preprotein mitochondrial import. The interaction with HSP90AA1 is direct and mediates the association of TOMM70 with IRF3 and TBK1. Upon mitochondrial depolarization, interacts with PINK1; the interaction is required for PINK1-TOM-TIM23 supercomplex formation which is critical for PINK1 stabilization at the outer mitochondrial membrane, kinase activation and downstream mitophagy.

It localises to the mitochondrion outer membrane. Acts as a receptor of the preprotein translocase complex of the outer mitochondrial membrane (TOM complex). Recognizes and mediates the translocation of mitochondrial preproteins from the cytosol into the mitochondria in a chaperone dependent manner. Mediates TBK1 and IRF3 activation induced by MAVS in response to Sendai virus infection and promotes host antiviral responses during virus infection. The protein is Mitochondrial import receptor subunit TOM70 of Rattus norvegicus (Rat).